Here is a 419-residue protein sequence, read N- to C-terminus: Equilibrative nucleotide transporter 5 (419 aa).

The next 11 helical transmembrane spans lie at 20-40, 56-76, 86-106, 108-128, 142-162, 186-206, 265-285, 292-312, 327-347, 354-374, and 393-413; these read MVVCCILGIGSLVSWNSLLSV, VLTFVYQPFSIGTIVIFAYNE, LIGYIVFTTSIFLLIILDLAT, GHGGIGPYIVLCAIVGSFGFA, LMCPELIQSFVAGLAVAGALT, IFLAISTLVEFLCVLLYAYVF, YVVNLFLIYVLTLSILPGFLY, GLGSWYALVLIAMYNWWDLVG, KGLTVAVLTRFLLVPAFYFTA, WMILLVSILGLTNGHLTVCIL, and LVLFILWGAFVGCALGWLWLI.

The protein belongs to the SLC29A/ENT transporter (TC 2.A.57) family.

It localises to the cell membrane. May be involved in nucleoside transport. The protein is Equilibrative nucleotide transporter 5 (ENT5) of Arabidopsis thaliana (Mouse-ear cress).